Consider the following 357-residue polypeptide: Red-sensitive opsin (357 aa).

At Met1–Val49 the chain is on the extracellular side. A glycan (N-linked (GlcNAc...) asparagine) is linked at Asn31. Residues Tyr50–Ala74 traverse the membrane as a helical segment. The Cytoplasmic segment spans residues Ser75–Asn86. The chain crosses the membrane as a helical span at residues Trp87–Phe112. Residues Phe113 to Glu126 lie on the Extracellular side of the membrane. Cys123 and Cys200 are disulfide-bonded. A helical transmembrane segment spans residues Gly127 to Trp146. Over Glu147 to Met165 the chain is Cytoplasmic. A helical transmembrane segment spans residues Ala166–Ser189. The Extracellular portion of the chain corresponds to Arg190–Ser215. A helical membrane pass occupies residues Tyr216 to Ile243. At Arg244–Arg265 the chain is on the cytoplasmic side. A helical membrane pass occupies residues Met266–Ala289. Over Ala290–His297 the chain is Extracellular. Residues Pro298–Met322 traverse the membrane as a helical segment. Lys309 bears the N6-(retinylidene)lysine mark. The Cytoplasmic portion of the chain corresponds to Asn323–Ala357.

Belongs to the G-protein coupled receptor 1 family. Opsin subfamily. In terms of processing, phosphorylated on some or all of the serine and threonine residues present in the C-terminal region. The color pigments are found in the cone photoreceptor cells.

The protein resides in the membrane. Functionally, visual pigments are the light-absorbing molecules that mediate vision. They consist of an apoprotein, opsin, covalently linked to cis-retinal. This chain is Red-sensitive opsin (R007), found in Psalidodon fasciatus (Banded astyanax).